The following is a 1013-amino-acid chain: Poly [ADP-ribose] polymerase 1 (1013 aa).

2 PARP-type zinc fingers span residues 10-92 and 113-203; these read YKAE…ESGG and FAVE…PAVK. Zn(2+)-binding residues include C22, C25, H54, C57, C125, C128, H159, and C162. Residues 202–228 are disordered; that stretch reads VKSEGKRKADEVDGGVSKKQKKEDEKL. Positions 207-209 match the Nuclear localization signal motif; it reads KRK. A PADR1 zinc-binding domain is found at 219–353; it reads KKQKKEDEKL…FKRQDRVFPK (135 aa). The zinc ribbon stretch occupies residues 284–326; sequence GSLKPCETCKGQLVFKSDAYYCTGDISAWTKCVFKTQTPDRKD. Residues C289, C292, C305, and C315 each contribute to the Zn(2+) site. The interval 353 to 385 is disordered; that stretch reads KDAPPAAATPSSGSTTSAATSVSSASKNLTEAP. The segment covering 356 to 378 has biased composition (low complexity); it reads PPAAATPSSGSTTSAATSVSSAS. The tract at residues 365-523 is automodification domain; sequence GSTTSAATSV…EGGSKSKKMK (159 aa). The BRCT domain maps to 385-461; that stretch reads PADKPLTGMK…RVVADDFLTD (77 aa). PolyADP-ribosyl glutamic acid occurs at positions 413, 435, 444, 445, 464, 471, 484, and 488. The span at 494–507 shows a compositional bias: low complexity; the sequence is AATKSTGAHSSKST. The interval 494 to 522 is disordered; sequence AATKSTGAHSSKSTGKVKEEEGGSKSKKM. E512 and E513 each carry polyADP-ribosyl glutamic acid. Positions 541–637 constitute a WGR domain; it reads CAHVLEQNGK…SNFTKYPNKF (97 aa). The region spanning 661 to 778 is the PARP alpha-helical domain; that stretch reads KSQLEKPVQD…DIEVAYSLLR (118 aa). In terms of domain architecture, PARP catalytic spans 787-1013; that stretch reads DPIDINYEKL…IRFNYQTSLW (227 aa). NAD(+) is bound by residues 861 to 863, G870, R877, and S903; that span reads HGS. E987 (for poly [ADP-ribose] polymerase activity) is an active-site residue.

It belongs to the ARTD/PARP family. Homodimer; PARP-type zinc-fingers from separate parp1 molecules form a dimer module that specifically recognizes DNA strand breaks. Poly-ADP-ribosylated on serine, glutamate and aspartate residues by autocatalysis. Auto-ADP-ribosylation on serine takes place following interaction with HPF1. Auto poly-ADP-ribosylation on serine residues promotes its dissociation from chromatin.

It localises to the chromosome. Its subcellular location is the nucleus. The protein resides in the nucleolus. It is found in the cytoplasm. The protein localises to the cytosol. The catalysed reaction is NAD(+) + (ADP-D-ribosyl)n-acceptor = nicotinamide + (ADP-D-ribosyl)n+1-acceptor + H(+).. It carries out the reaction L-seryl-[protein] + NAD(+) = O-(ADP-D-ribosyl)-L-seryl-[protein] + nicotinamide + H(+). The enzyme catalyses L-aspartyl-[protein] + NAD(+) = 4-O-(ADP-D-ribosyl)-L-aspartyl-[protein] + nicotinamide. It catalyses the reaction L-glutamyl-[protein] + NAD(+) = 5-O-(ADP-D-ribosyl)-L-glutamyl-[protein] + nicotinamide. The catalysed reaction is L-tyrosyl-[protein] + NAD(+) = O-(ADP-D-ribosyl)-L-tyrosyl-[protein] + nicotinamide + H(+). It carries out the reaction L-histidyl-[protein] + NAD(+) = N(tele)-(ADP-D-ribosyl)-L-histidyl-[protein] + nicotinamide + H(+). Its activity is regulated as follows. ADP-ribosyltransferase activity is regulated via an allosteric activation mechanism. In absence of activation signal, parp1 is autoinhibited by the PARP alpha-helical domain (also named HD region), which prevents effective NAD(+)-binding. Activity is highly stimulated by signals, such as DNA strand breaks. Binding to damaged DNA unfolds the PARP alpha-helical domain, relieving autoinhibition. Poly-ADP-ribosyltransferase activity is tightly regulated and parp1 is removed from damaged chromatin following initial poly-ADP-ribosylation of chromatin to avoid prolonged residence (trapping) that has cytotoxic consequences. A number of factors or post-translational modifications (auto-poly-ADP-ribosylation) promote parp1 removal from chromatin. Functionally, poly-ADP-ribosyltransferase that mediates poly-ADP-ribosylation of proteins and plays a key role in DNA repair. Mediates glutamate, aspartate, serine, histidine or tyrosine ADP-ribosylation of proteins: the ADP-D-ribosyl group of NAD(+) is transferred to the acceptor carboxyl group of target residues and further ADP-ribosyl groups are transferred to the 2'-position of the terminal adenosine moiety, building up a polymer with an average chain length of 20-30 units. Serine ADP-ribosylation of proteins constitutes the primary form of ADP-ribosylation of proteins in response to DNA damage. Specificity for the different amino acids is conferred by interacting factors, such as hpf1 and nmnat1. Following interaction with hpf1, catalyzes serine ADP-ribosylation of target proteins; hpf1 confers serine specificity by completing the parp1 active site. Also catalyzes tyrosine ADP-ribosylation of target proteins following interaction with hpf1. Following interaction with nmnat1, catalyzes glutamate and aspartate ADP-ribosylation of target proteins; nmnat1 confers glutamate and aspartate specificity. Parp1 initiates the repair of DNA breaks: recognizes and binds DNA breaks within chromatin and recruits hpf1, licensing serine ADP-ribosylation of target proteins, such as histones (H2BS6ADPr and H3S10ADPr), thereby promoting decompaction of chromatin and the recruitment of repair factors leading to the reparation of DNA strand breaks. In addition to base excision repair (BER) pathway, also involved in double-strand breaks (DSBs) repair. Mediates the poly-ADP-ribosylation of a number of proteins. In addition to proteins, also able to ADP-ribosylate DNA: catalyzes ADP-ribosylation of DNA strand break termini containing terminal phosphates and a 2'-OH group in single- and double-stranded DNA, respectively. Parp1-mediated DNA repair in neurons plays a role in sleep: senses DNA damage in neurons and promotes sleep, facilitating efficient DNA repair. In addition to DNA repair, also involved in other processes, such as transcription regulation, programmed cell death, membrane repair, adipogenesis and innate immunity. Acts as a repressor of transcription: binds to nucleosomes and modulates chromatin structure in a manner similar to histone H1, thereby altering RNA polymerase II. Acts both as a positive and negative regulator of transcription elongation, depending on the context. Poly-ADP-ribose chains generated by parp1 also play a role in poly-ADP-ribose-dependent cell death, a process named parthanatos. Also acts as a negative regulator of the cGAS-STING pathway by mediating poly-ADP-ribosylation and inactivation of cgas. Acts as a negative regulator of adipogenesis by catalyzing poly ADP-ribosylation of histone H2B on 'Glu-35' (H2BE35ADPr). In Danio rerio (Zebrafish), this protein is Poly [ADP-ribose] polymerase 1.